Here is a 171-residue protein sequence, read N- to C-terminus: tRNA-splicing endonuclease (171 aa).

Active-site residues include Y110, H117, and K148.

The protein belongs to the tRNA-intron endonuclease family. Archaeal short subfamily. Homotetramer; although the tetramer contains four active sites, only two participate in the cleavage. Therefore, it should be considered as a dimer of dimers.

It catalyses the reaction pretRNA = a 3'-half-tRNA molecule with a 5'-OH end + a 5'-half-tRNA molecule with a 2',3'-cyclic phosphate end + an intron with a 2',3'-cyclic phosphate and a 5'-hydroxyl terminus.. Its function is as follows. Endonuclease that removes tRNA introns. Cleaves pre-tRNA at the 5'- and 3'-splice sites to release the intron. The products are an intron and two tRNA half-molecules bearing 2',3' cyclic phosphate and 5'-OH termini. Recognizes a pseudosymmetric substrate in which 2 bulged loops of 3 bases are separated by a stem of 4 bp. This Thermococcus onnurineus (strain NA1) protein is tRNA-splicing endonuclease.